Consider the following 83-residue polypeptide: Small ribosomal subunit protein uS17 (83 aa).

This sequence belongs to the universal ribosomal protein uS17 family. In terms of assembly, part of the 30S ribosomal subunit.

Its function is as follows. One of the primary rRNA binding proteins, it binds specifically to the 5'-end of 16S ribosomal RNA. This is Small ribosomal subunit protein uS17 from Chlamydia trachomatis serovar L2 (strain ATCC VR-902B / DSM 19102 / 434/Bu).